A 2296-amino-acid chain; its full sequence is Protein Ycf2 (2296 aa).

An ATP-binding site is contributed by 1650-1657 (GSIGIGRS).

The protein belongs to the Ycf2 family.

It localises to the plastid. The protein localises to the chloroplast stroma. Its function is as follows. Probable ATPase of unknown function. Its presence in a non-photosynthetic plant (Epifagus virginiana) and experiments in tobacco indicate that it has an essential function which is probably not related to photosynthesis. This Arabis hirsuta (Hairy rock-cress) protein is Protein Ycf2.